A 553-amino-acid chain; its full sequence is Hydroxylamine reductase (553 aa).

[2Fe-2S] cluster contacts are provided by C3, C6, C18, and C25. 8 residues coordinate hybrid [4Fe-2O-2S] cluster: H252, E276, C320, C408, C436, C461, E495, and K497. The residue at position 408 (C408) is a Cysteine persulfide.

It belongs to the HCP family. [2Fe-2S] cluster is required as a cofactor. It depends on hybrid [4Fe-2O-2S] cluster as a cofactor.

It is found in the cytoplasm. The enzyme catalyses A + NH4(+) + H2O = hydroxylamine + AH2 + H(+). Its function is as follows. Catalyzes the reduction of hydroxylamine to form NH(3) and H(2)O. The sequence is that of Hydroxylamine reductase from Tolumonas auensis (strain DSM 9187 / NBRC 110442 / TA 4).